The primary structure comprises 482 residues: tRNA sulfurtransferase (482 aa).

One can recognise a THUMP domain in the interval 58 to 160 (VEALQELSRV…GNKAYLYSNV (103 aa)). ATP contacts are provided by residues 178–179 (LF), 203–204 (HY), R260, G282, and Q291. Residues C341 and C444 are joined by a disulfide bond. Residues 400–482 (IPGDSIIIDV…RYRAGLEKTR (83 aa)) enclose the Rhodanese domain. C444 (cysteine persulfide intermediate) is an active-site residue.

This sequence belongs to the ThiI family.

Its subcellular location is the cytoplasm. The catalysed reaction is [ThiI sulfur-carrier protein]-S-sulfanyl-L-cysteine + a uridine in tRNA + 2 reduced [2Fe-2S]-[ferredoxin] + ATP + H(+) = [ThiI sulfur-carrier protein]-L-cysteine + a 4-thiouridine in tRNA + 2 oxidized [2Fe-2S]-[ferredoxin] + AMP + diphosphate. It catalyses the reaction [ThiS sulfur-carrier protein]-C-terminal Gly-Gly-AMP + S-sulfanyl-L-cysteinyl-[cysteine desulfurase] + AH2 = [ThiS sulfur-carrier protein]-C-terminal-Gly-aminoethanethioate + L-cysteinyl-[cysteine desulfurase] + A + AMP + 2 H(+). It functions in the pathway cofactor biosynthesis; thiamine diphosphate biosynthesis. Catalyzes the ATP-dependent transfer of a sulfur to tRNA to produce 4-thiouridine in position 8 of tRNAs, which functions as a near-UV photosensor. Also catalyzes the transfer of sulfur to the sulfur carrier protein ThiS, forming ThiS-thiocarboxylate. This is a step in the synthesis of thiazole, in the thiamine biosynthesis pathway. The sulfur is donated as persulfide by IscS. In Desulfurococcus amylolyticus (strain DSM 18924 / JCM 16383 / VKM B-2413 / 1221n) (Desulfurococcus kamchatkensis), this protein is tRNA sulfurtransferase.